Reading from the N-terminus, the 142-residue chain is Large ribosomal subunit protein uL11 (142 aa).

The protein belongs to the universal ribosomal protein uL11 family. In terms of assembly, part of the ribosomal stalk of the 50S ribosomal subunit. Interacts with L10 and the large rRNA to form the base of the stalk. L10 forms an elongated spine to which L12 dimers bind in a sequential fashion forming a multimeric L10(L12)X complex. Post-translationally, one or more lysine residues are methylated.

Functionally, forms part of the ribosomal stalk which helps the ribosome interact with GTP-bound translation factors. In Mycobacteroides abscessus (strain ATCC 19977 / DSM 44196 / CCUG 20993 / CIP 104536 / JCM 13569 / NCTC 13031 / TMC 1543 / L948) (Mycobacterium abscessus), this protein is Large ribosomal subunit protein uL11.